The following is a 942-amino-acid chain: Probable serine/threonine-protein kinase DDB_G0279719 (942 aa).

Residues 4–617 (YEVVKLIGVG…IDLILQNKLF (614 aa)) form the Protein kinase domain. Residues 10-18 (IGVGGEAKA) and K33 each bind ATP. Disordered stretches follow at residues 109–170 (NNNQ…INNN), 247–303 (SFSN…NGNT), 352–371 (QPPQSTSTSKTDSSPTGADV), and 408–445 (NDPSSHSQPQHQQLHSSPQQLPQSPRLKPNIESSLNIN). Residues 258-272 (NSNDSNLHQSSSNSS) are compositionally biased toward low complexity. A compositionally biased stretch (polar residues) spans 288 to 303 (SPGTSTPYQKGSNGNT). Composition is skewed to low complexity over residues 353–367 (PPQSTSTSKTDSSPT) and 410–432 (PSSHSQPQHQQLHSSPQQLPQSP). Residue D487 is the Proton acceptor of the active site. The tract at residues 642 to 686 (TNSKSNSSNNLNNSNSNNDIINNNNNNNSSNNINNNNIVNLNNSY) is disordered. Residues 675 to 703 (NNNNIVNLNNSYNNKQDKCEQRNKSLNQN) are a coiled coil.

This sequence belongs to the protein kinase superfamily. Ser/Thr protein kinase family.

The catalysed reaction is L-seryl-[protein] + ATP = O-phospho-L-seryl-[protein] + ADP + H(+). The enzyme catalyses L-threonyl-[protein] + ATP = O-phospho-L-threonyl-[protein] + ADP + H(+). The protein is Probable serine/threonine-protein kinase DDB_G0279719 of Dictyostelium discoideum (Social amoeba).